Consider the following 267-residue polypeptide: Tryptophan synthase alpha chain (267 aa).

Residues Glu51 and Asp62 each act as proton acceptor in the active site.

The protein belongs to the TrpA family. As to quaternary structure, tetramer of two alpha and two beta chains.

It catalyses the reaction (1S,2R)-1-C-(indol-3-yl)glycerol 3-phosphate + L-serine = D-glyceraldehyde 3-phosphate + L-tryptophan + H2O. It participates in amino-acid biosynthesis; L-tryptophan biosynthesis; L-tryptophan from chorismate: step 5/5. Functionally, the alpha subunit is responsible for the aldol cleavage of indoleglycerol phosphate to indole and glyceraldehyde 3-phosphate. The polypeptide is Tryptophan synthase alpha chain (Prochlorococcus marinus (strain SARG / CCMP1375 / SS120)).